The sequence spans 304 residues: GTPase Era (304 aa).

The 168-residue stretch at 9–176 (KSGFVSIIGR…LLEITKHLSE (168 aa)) folds into the Era-type G domain. Residues 17 to 24 (GRPNVGKS) are G1. 17-24 (GRPNVGKS) serves as a coordination point for GTP. The G2 stretch occupies residues 43-47 (QTTRN). The G3 stretch occupies residues 64 to 67 (DTPG). Residues 64–68 (DTPGI) and 126–129 (NKID) contribute to the GTP site. A G4 region spans residues 126–129 (NKID). The segment at 155–157 (VSA) is G5. A KH type-2 domain is found at 199 to 285 (IREKVLHLTR…FLELWVKVQK (87 aa)).

It belongs to the TRAFAC class TrmE-Era-EngA-EngB-Septin-like GTPase superfamily. Era GTPase family. Monomer.

It is found in the cytoplasm. The protein localises to the cell membrane. In terms of biological role, an essential GTPase that binds both GDP and GTP, with rapid nucleotide exchange. Plays a role in 16S rRNA processing and 30S ribosomal subunit biogenesis and possibly also in cell cycle regulation and energy metabolism. The polypeptide is GTPase Era (Halalkalibacterium halodurans (strain ATCC BAA-125 / DSM 18197 / FERM 7344 / JCM 9153 / C-125) (Bacillus halodurans)).